The sequence spans 387 residues: Anhydro-N-acetylmuramic acid kinase (387 aa).

Position 9–16 (9–16 (GTSADGVD)) interacts with ATP.

The protein belongs to the anhydro-N-acetylmuramic acid kinase family.

It carries out the reaction 1,6-anhydro-N-acetyl-beta-muramate + ATP + H2O = N-acetyl-D-muramate 6-phosphate + ADP + H(+). The protein operates within amino-sugar metabolism; 1,6-anhydro-N-acetylmuramate degradation. It functions in the pathway cell wall biogenesis; peptidoglycan recycling. In terms of biological role, catalyzes the specific phosphorylation of 1,6-anhydro-N-acetylmuramic acid (anhMurNAc) with the simultaneous cleavage of the 1,6-anhydro ring, generating MurNAc-6-P. Is required for the utilization of anhMurNAc either imported from the medium or derived from its own cell wall murein, and thus plays a role in cell wall recycling. The chain is Anhydro-N-acetylmuramic acid kinase from Synechococcus sp. (strain WH7803).